The sequence spans 470 residues: Glutamate--tRNA ligase 2 (470 aa).

Residues Pro11–Gly21 carry the 'HIGH' region motif. Positions Lys238 to Arg242 match the 'KMSKS' region motif. Lys241 contributes to the ATP binding site.

The protein belongs to the class-I aminoacyl-tRNA synthetase family. Glutamate--tRNA ligase type 1 subfamily. Monomer.

Its subcellular location is the cytoplasm. It carries out the reaction tRNA(Glu) + L-glutamate + ATP = L-glutamyl-tRNA(Glu) + AMP + diphosphate. In terms of biological role, catalyzes the attachment of glutamate to tRNA(Glu) in a two-step reaction: glutamate is first activated by ATP to form Glu-AMP and then transferred to the acceptor end of tRNA(Glu). The polypeptide is Glutamate--tRNA ligase 2 (Ehrlichia ruminantium (strain Welgevonden)).